The primary structure comprises 657 residues: UvrABC system protein B (657 aa).

Residues 23 to 414 enclose the Helicase ATP-binding domain; it reads KSIKKGNKYQ…KENIFHQIMR (392 aa). 36-43 lines the ATP pocket; the sequence is GVTGSGKT. The Beta-hairpin signature appears at 89–112; the sequence is YYDYYQPEAYIPRTDVFIEKDSST. The 163-residue stretch at 431–593 folds into the Helicase C-terminal domain; that stretch reads QVEILFDEAK…ITPTSVKRHI (163 aa). Residues 622-657 form the UVR domain; sequence AKLVKELRKQMLEAAKALEFEKAAAIRDEINKLRDL.

This sequence belongs to the UvrB family. As to quaternary structure, forms a heterotetramer with UvrA during the search for lesions. Interacts with UvrC in an incision complex.

Its subcellular location is the cytoplasm. In terms of biological role, the UvrABC repair system catalyzes the recognition and processing of DNA lesions. A damage recognition complex composed of 2 UvrA and 2 UvrB subunits scans DNA for abnormalities. Upon binding of the UvrA(2)B(2) complex to a putative damaged site, the DNA wraps around one UvrB monomer. DNA wrap is dependent on ATP binding by UvrB and probably causes local melting of the DNA helix, facilitating insertion of UvrB beta-hairpin between the DNA strands. Then UvrB probes one DNA strand for the presence of a lesion. If a lesion is found the UvrA subunits dissociate and the UvrB-DNA preincision complex is formed. This complex is subsequently bound by UvrC and the second UvrB is released. If no lesion is found, the DNA wraps around the other UvrB subunit that will check the other stand for damage. The polypeptide is UvrABC system protein B (Campylobacter jejuni subsp. jejuni serotype O:2 (strain ATCC 700819 / NCTC 11168)).